A 405-amino-acid chain; its full sequence is Probable tRNA sulfurtransferase (405 aa).

The region spanning 75–183 (PRAAGAAADV…QNLAYVYLET (109 aa)) is the THUMP domain. Residues 201–202 (LM), lysine 285, glycine 307, and glutamine 316 each bind ATP.

It belongs to the ThiI family.

It localises to the cytoplasm. It catalyses the reaction [ThiI sulfur-carrier protein]-S-sulfanyl-L-cysteine + a uridine in tRNA + 2 reduced [2Fe-2S]-[ferredoxin] + ATP + H(+) = [ThiI sulfur-carrier protein]-L-cysteine + a 4-thiouridine in tRNA + 2 oxidized [2Fe-2S]-[ferredoxin] + AMP + diphosphate. The enzyme catalyses [ThiS sulfur-carrier protein]-C-terminal Gly-Gly-AMP + S-sulfanyl-L-cysteinyl-[cysteine desulfurase] + AH2 = [ThiS sulfur-carrier protein]-C-terminal-Gly-aminoethanethioate + L-cysteinyl-[cysteine desulfurase] + A + AMP + 2 H(+). Its pathway is cofactor biosynthesis; thiamine diphosphate biosynthesis. Functionally, catalyzes the ATP-dependent transfer of a sulfur to tRNA to produce 4-thiouridine in position 8 of tRNAs, which functions as a near-UV photosensor. Also catalyzes the transfer of sulfur to the sulfur carrier protein ThiS, forming ThiS-thiocarboxylate. This is a step in the synthesis of thiazole, in the thiamine biosynthesis pathway. The sulfur is donated as persulfide by IscS. This chain is Probable tRNA sulfurtransferase, found in Methanosarcina mazei (strain ATCC BAA-159 / DSM 3647 / Goe1 / Go1 / JCM 11833 / OCM 88) (Methanosarcina frisia).